Here is a 155-residue protein sequence, read N- to C-terminus: Small ribosomal subunit protein uS7cz/uS7cy (155 aa).

The protein belongs to the universal ribosomal protein uS7 family. As to quaternary structure, part of the 30S ribosomal subunit.

It localises to the plastid. It is found in the chloroplast. Functionally, one of the primary rRNA binding proteins, it binds directly to 16S rRNA where it nucleates assembly of the head domain of the 30S subunit. This Atropa belladonna (Belladonna) protein is Small ribosomal subunit protein uS7cz/uS7cy (rps7-A).